We begin with the raw amino-acid sequence, 1379 residues long: DNA-directed RNA polymerase subunit beta (1379 aa).

It belongs to the RNA polymerase beta chain family. In plastids the minimal PEP RNA polymerase catalytic core is composed of four subunits: alpha, beta, beta', and beta''. When a (nuclear-encoded) sigma factor is associated with the core the holoenzyme is formed, which can initiate transcription.

The protein localises to the plastid. The protein resides in the chloroplast. The enzyme catalyses RNA(n) + a ribonucleoside 5'-triphosphate = RNA(n+1) + diphosphate. Functionally, DNA-dependent RNA polymerase catalyzes the transcription of DNA into RNA using the four ribonucleoside triphosphates as substrates. The polypeptide is DNA-directed RNA polymerase subunit beta (Trieres chinensis (Marine centric diatom)).